A 257-amino-acid polypeptide reads, in one-letter code: VASGYGPPSSHPSSRVVNGEDAVPYSWPWQVSLQYEKNGSFHHTCGGSLIAPDWVVTAGHCISSSLTYQVALGDYNLAVKEGPEQVIPINSGDLFVHPLWNRLCVACGNDIALIKLSRSAQLGDAVQLASLPPAGDILPNETPCYITGWGRLYTNGPLPDKLQRALLPVVDYEHCSKWNWWGSTVKKTMVCAGGDIRSGCNGDSGGPLNCPTDDGGWQVHGVTSFVSSFGCNTQRKPTVFTRVSAFIDWIEETIASH.

The segment at residues 1–2 (VA) is a signal peptide (or 3). Positions 3–15 (SGYGPPSSHPSSR) are cleaved as a propeptide — activation peptide. The Peptidase S1 domain occupies 16–255 (VVNGEDAVPY…FIDWIEETIA (240 aa)). N-linked (GlcNAc...) asparagine glycosylation occurs at asparagine 38. Intrachain disulfides connect cysteine 45-cysteine 61 and cysteine 104-cysteine 107. The active-site Charge relay system is the histidine 60. Catalysis depends on aspartate 110, which acts as the Charge relay system. 3 cysteine pairs are disulfide-bonded: cysteine 144–cysteine 210, cysteine 175–cysteine 191, and cysteine 200–cysteine 231. Catalysis depends on serine 204, which acts as the Charge relay system.

This sequence belongs to the peptidase S1 family. Elastase subfamily.

The enzyme catalyses Preferential cleavage: Ala-|-Xaa. Does not hydrolyze elastin.. Efficient protease with alanine specificity but only little elastolytic activity. This Macaca mulatta (Rhesus macaque) protein is Chymotrypsin-like elastase family member 3B (CELA3B).